A 238-amino-acid polypeptide reads, in one-letter code: Ubiquitin-conjugating enzyme E2 R2 (238 aa).

In terms of domain architecture, UBC core spans Ser-8 to Ala-174. Cys-93 (glycyl thioester intermediate) is an active-site residue. An important for ubiquitin transfer region spans residues His-98 to Arg-113. A disordered region spans residues Thr-194–Ser-238. Residues Leu-206–Ser-238 show a composition bias toward acidic residues. Ser-233 bears the Phosphoserine; by CK2 mark.

It belongs to the ubiquitin-conjugating enzyme family. In terms of assembly, interacts with multiple Cul1-RING E3 ubiquitin-protein ligase complexes, also known as SCF (SKP1-CUL1-F-box protein) complexes, including SCF(FBXW7) and SCF(BTRC). Interacts with multiple Cul2-RING (CRL2) E3 ubiquitin-protein ligase complexes, also known as ECS (Elongin BC-CUL2/5-SOCS-box protein) complexes, including CRL2(FEM1C) and ECS(VHL). When phosphorylated, interacts with beta-TrCP (BTRC).

The catalysed reaction is S-ubiquitinyl-[E1 ubiquitin-activating enzyme]-L-cysteine + [E2 ubiquitin-conjugating enzyme]-L-cysteine = [E1 ubiquitin-activating enzyme]-L-cysteine + S-ubiquitinyl-[E2 ubiquitin-conjugating enzyme]-L-cysteine.. It functions in the pathway protein modification; protein ubiquitination. With respect to regulation, neddylation of CUL2 in the CRL2(FEM1C) E3 ligase complex increases substrate affinity of UBE2R2 and the ubiquitin-transfer rate in the E2-E3 complex. In terms of biological role, E2 ubiquitin-conjugating enzyme that accepts ubiquitin from an E1 ubiquitin-activating protein, and catalyzes its covalent attachment to other proteins by an E3 ubiquitin-protein ligase complex. In vitro catalyzes monoubiquitination and 'Lys-48'-linked polyubiquitination. Works in collaboration with various Cul1-RING and Cul2-RING E3 ligase complexes. May be involved in degradation of katenin. The chain is Ubiquitin-conjugating enzyme E2 R2 (UBE2R2) from Homo sapiens (Human).